Here is a 220-residue protein sequence, read N- to C-terminus: Small ribosomal subunit protein uS3 (220 aa).

Residues isoleucine 38 to arginine 106 enclose the KH type-2 domain.

This sequence belongs to the universal ribosomal protein uS3 family. In terms of assembly, part of the 30S ribosomal subunit. Forms a tight complex with proteins S10 and S14.

In terms of biological role, binds the lower part of the 30S subunit head. Binds mRNA in the 70S ribosome, positioning it for translation. This chain is Small ribosomal subunit protein uS3, found in Myxococcus xanthus (strain DK1622).